The chain runs to 166 residues: RNA polymerase sigma factor SigV (166 aa).

The Polymerase core binding signature appears at 38-51 (DIVQESIKKALSSV). Residues 131-150 (LEEIAEITGENTNTVKTRLY) constitute a DNA-binding region (H-T-H motif).

This sequence belongs to the sigma-70 factor family. ECF subfamily. Interacts with RsiV.

Functionally, sigma factors are initiation factors that promote the attachment of RNA polymerase to specific initiation sites and are then released. Positively regulates the expression of proteins involved in stress responses against bacitracin, paraquat and tellurite. This Bacillus subtilis (strain 168) protein is RNA polymerase sigma factor SigV (sigV).